Reading from the N-terminus, the 792-residue chain is Coiled-coil domain-containing protein R3HCC1L (792 aa).

The tract at residues 7–27 is EJC-binding motif; may mediate interaction with the EJC; sequence RCRVRARRPDMALYVPKARRG. Disordered stretches follow at residues 32 to 61 and 527 to 567; these read KTGD…QKEV and EFKT…TSHT. Ser688 bears the Phosphoserine mark. A Phosphothreonine modification is found at Thr712. Positions 751–783 form a coiled coil; that stretch reads RSKQSKTEREAELKKLQEARERKRLEAKQREDI. The interval 772 to 792 is disordered; the sequence is RKRLEAKQREDIWEGRDQSTV.

As to quaternary structure, may interact with the exon junction complex (EJC) composed at least of CASC3, EIF4A3, MAGOH and RBM8A. In terms of tissue distribution, expressed in placenta.

The chain is Coiled-coil domain-containing protein R3HCC1L (R3HCC1L) from Homo sapiens (Human).